Reading from the N-terminus, the 566-residue chain is Proline--tRNA ligase 1 (566 aa).

Belongs to the class-II aminoacyl-tRNA synthetase family. ProS type 1 subfamily. Homodimer.

The protein resides in the cytoplasm. It catalyses the reaction tRNA(Pro) + L-proline + ATP = L-prolyl-tRNA(Pro) + AMP + diphosphate. Catalyzes the attachment of proline to tRNA(Pro) in a two-step reaction: proline is first activated by ATP to form Pro-AMP and then transferred to the acceptor end of tRNA(Pro). As ProRS can inadvertently accommodate and process non-cognate amino acids such as alanine and cysteine, to avoid such errors it has two additional distinct editing activities against alanine. One activity is designated as 'pretransfer' editing and involves the tRNA(Pro)-independent hydrolysis of activated Ala-AMP. The other activity is designated 'posttransfer' editing and involves deacylation of mischarged Ala-tRNA(Pro). The misacylated Cys-tRNA(Pro) is not edited by ProRS. In Bacillus thuringiensis subsp. konkukian (strain 97-27), this protein is Proline--tRNA ligase 1.